We begin with the raw amino-acid sequence, 74 residues long: UPF0435 protein GK0418 (74 aa).

It belongs to the UPF0435 family.

The chain is UPF0435 protein GK0418 from Geobacillus kaustophilus (strain HTA426).